Here is an 836-residue protein sequence, read N- to C-terminus: General negative regulator of transcription subunit 3 (836 aa).

Coiled-coil stretches lie at residues 36–68 (NNPSQKDKLESDLKREVKKLQRLREQIKSWQSS), 119–195 (RERR…ANEE), and 255–292 (NTSDANESLQDISKLSKKEQRKLEREAKKAAKLAAKNA). Over residues 252–267 (EDNNTSDANESLQDIS) the composition is skewed to polar residues. Disordered regions lie at residues 252–284 (EDNNTSDANESLQDISKLSKKEQRKLEREAKKA), 296–391 (AIPV…LKPA), 410–471 (AVEK…NTGA), and 513–532 (NPKSEHEVATTVNQNGPENT). Basic and acidic residues predominate over residues 268-283 (KLSKKEQRKLEREAKK). Residues Ser303, Ser307, and Ser322 each carry the phosphoserine modification. Polar residues predominate over residues 341–386 (SIKSPRSSADNLLPSLQKSPSSATPETPTNVHTHIHQTPNGITGAT). The segment covering 418-446 (TSASSTISNTSTKTPTTAAATTTSSNANS) has biased composition (low complexity). 2 positions are modified to phosphoserine: Ser446 and Ser450. 2 stretches are compositionally biased toward polar residues: residues 447 to 468 (RIGSALNTPKLSTSSLSLQPDN) and 522 to 531 (TTVNQNGPEN). A Glycyl lysine isopeptide (Lys-Gly) (interchain with G-Cter in ubiquitin) cross-link involves residue Lys535. The tract at residues 537–583 (MEQKEEESPEERNKLQVPTFGVFDDDFESDRDSETEPEEEEQPSTPK) is disordered. The segment covering 559-578 (FDDDFESDRDSETEPEEEEQ) has biased composition (acidic residues). 2 positions are modified to phosphoserine: Ser565 and Ser569. Phosphothreonine is present on Thr571. At Ser657 the chain carries Phosphoserine. Residues 803-831 (NVNDQSNVTLEQQKQEISHGKQLLKQLKQ) are a coiled coil.

This sequence belongs to the CNOT2/3/5 family. Forms a NOT protein complex that comprises NOT1, NOT2, NOT3, NOT4 and NOT5. Subunit of the 1.0 MDa CCR4-NOT core complex that contains CCR4, CAF1, NOT1, NOT2, NOT3, NOT4, NOT5, CAF40 and CAF130. The core complex probably is part of a less characterized 1.9 MDa CCR4-NOT complex.

Its subcellular location is the cytoplasm. The protein resides in the nucleus. Acts as a component of the CCR4-NOT core complex, which in the nucleus seems to be a general transcription factor, and in the cytoplasm the major mRNA deadenylase involved in mRNA turnover. The NOT protein subcomplex negatively regulates the basal and activated transcription of many genes. Preferentially affects TC-type TATA element-dependent transcription. Could directly or indirectly inhibit component(s) of the general transcription machinery. The chain is General negative regulator of transcription subunit 3 (NOT3) from Saccharomyces cerevisiae (strain ATCC 204508 / S288c) (Baker's yeast).